A 404-amino-acid polypeptide reads, in one-letter code: Cytochrome b (404 aa).

The next 4 membrane-spanning stretches (helical) occupy residues phenylalanine 35–methionine 55, tryptophan 79–phenylalanine 101, valine 116–valine 136, and phenylalanine 182–alanine 202. Positions 85 and 99 each coordinate heme b. Residues histidine 186 and histidine 200 each contribute to the heme b site. Residue histidine 205 coordinates a ubiquinone. A run of 4 helical transmembrane segments spans residues isoleucine 228–phenylalanine 248, leucine 292–asparagine 312, isoleucine 324–cysteine 344, and tyrosine 351–proline 370.

The protein belongs to the cytochrome b family. In terms of assembly, the main subunits of complex b-c1 are: cytochrome b, cytochrome c1 and the Rieske protein. Requires heme b as cofactor.

It localises to the mitochondrion inner membrane. In terms of biological role, component of the ubiquinol-cytochrome c reductase complex (complex III or cytochrome b-c1 complex) that is part of the mitochondrial respiratory chain. The b-c1 complex mediates electron transfer from ubiquinol to cytochrome c. Contributes to the generation of a proton gradient across the mitochondrial membrane that is then used for ATP synthesis. This Marchantia polymorpha (Common liverwort) protein is Cytochrome b (MT-CYB).